The following is a 96-amino-acid chain: Neurotoxin 23 (96 aa).

An N-terminal signal peptide occupies residues 1–22; sequence MKNIVIIITVAVLFNLFGESLQ. In terms of domain architecture, LCN-type CS-alpha/beta spans 26-89; the sequence is FETYPLNQDD…FLAEIIDTCN (64 aa). Intrachain disulfides connect Cys-40-Cys-63, Cys-49-Cys-68, and Cys-53-Cys-70.

It belongs to the long (3 C-C) scorpion toxin superfamily. Expressed by the venom gland.

The protein localises to the secreted. The protein is Neurotoxin 23 of Lychas mucronatus (Chinese swimming scorpion).